The primary structure comprises 514 residues: Major facilitator superfamily domain-containing protein 4A (514 aa).

5 helical membrane-spanning segments follow: residues 19–39 (LTYW…GPTL), 53–73 (ISWV…LGGV), 82–102 (LWAL…IPFC), 107–127 (VLAS…TVAN), and 139–159 (AVFL…SPLI). Asn177 carries an N-linked (GlcNAc...) asparagine glycan. A run of 7 helical transmembrane segments spans residues 221 to 241 (YAFW…LMLL), 307 to 327 (FFAI…LTGA), 347 to 367 (VAGY…LLSI), 376 to 396 (ATMV…LLIF), 400 to 420 (VVFL…TFPS), 438 to 458 (VLVT…GSIF), and 466 to 486 (FLVC…LLLF).

It belongs to the major facilitator superfamily.

The protein resides in the membrane. In Homo sapiens (Human), this protein is Major facilitator superfamily domain-containing protein 4A.